Reading from the N-terminus, the 598-residue chain is UvrABC system protein C (598 aa).

Positions 13 to 91 (TLPGVYRMVD…IKGLKPRFNI (79 aa)) constitute a GIY-YIG domain. The UVR domain occupies 200–235 (TALTEEITAQMNAAAENLDFETAAYLRDRLRMLATV).

This sequence belongs to the UvrC family. In terms of assembly, interacts with UvrB in an incision complex.

It is found in the cytoplasm. The UvrABC repair system catalyzes the recognition and processing of DNA lesions. UvrC both incises the 5' and 3' sides of the lesion. The N-terminal half is responsible for the 3' incision and the C-terminal half is responsible for the 5' incision. This Thiobacillus denitrificans (strain ATCC 25259 / T1) protein is UvrABC system protein C.